A 68-amino-acid chain; its full sequence is Medusin-DA1 (68 aa).

A signal peptide spans 1-22 (MAFLKKSLFLVLFLGLVSLSVC). Positions 23 to 48 (EEEKRENEEEKNEQEEDDREERNEEK) are excised as a propeptide. The interval 25 to 47 (EKRENEEEKNEQEEDDREERNEE) is disordered. Residues 31–41 (EEKNEQEEDDR) are compositionally biased toward acidic residues. Leu67 is subject to Leucine amide.

Belongs to the frog skin active peptide (FSAP) family. Medusin subfamily. As to expression, expressed by the skin glands.

The protein resides in the secreted. Antimicrobial peptide with activity against Gram-positive bacteria (S.aureus, MIC=32 mg/L) and fungi (C.albicans, MIC=64 mg/L). Shows weak hemolytic activity. This is Medusin-DA1 from Agalychnis dacnicolor (Giant Mexican leaf frog).